Consider the following 248-residue polypeptide: Pathogenesis-related thaumatin-like protein 3.4 (248 aa).

An N-terminal signal peptide occupies residues 1–25 (MARAILWVLLTVMAVSLLLHAGVEG). 8 disulfides stabilise this stretch: C34/C227, C75/C85, C90/C96, C141/C216, C146/C199, C154/C164, C168/C177, and C178/C186. A glycan (N-linked (GlcNAc...) asparagine) is linked at N235.

This sequence belongs to the thaumatin family. As to expression, mainly expressed in male and female strobili, and, at lower levels, in roots of seedlings and saplings.

Its function is as follows. May be involved in disease resistance. The sequence is that of Pathogenesis-related thaumatin-like protein 3.4 from Cryptomeria japonica (Japanese cedar).